Reading from the N-terminus, the 131-residue chain is Protein Bouncer (131 aa).

The first 26 residues, 1 to 26, serve as a signal peptide directing secretion; the sequence is MGSLRTRQLFHAALLWLCLPLPLLLC. 4 disulfides stabilise this stretch: C31–C56, C50–C74, C80–C99, and C100–C105. The region spanning 31 to 106 is the UPAR/Ly6 domain; the sequence is CYYSPVLEKE…YSCCDWPYCN (76 aa). N65 carries N-linked (GlcNAc...) asparagine glycosylation. A lipid anchor (GPI-anchor amidated asparagine) is attached at N106. Positions 107 to 131 are cleaved as a propeptide — removed in mature form; the sequence is RAVALEPLTAMLVAAAVVACSFCLT.

It belongs to the SPACA4/bouncer family. In terms of assembly, interacts with spermatocyte complex composed of izumo1, spaca6 and tmem81. In terms of tissue distribution, expressed in oocytes. Not expressed in testis.

It localises to the cell membrane. In terms of biological role, oocyte-expressed fertilization factor that mediates sperm-egg binding and is essential for sperm entry into the egg. Necessary and sufficient to mediate species-specific gamete recognition and fertilization, which is essential for vertebrate species performing external fertilization. External fertilization cannot guarantee that only conspecific sperm reaches the egg by precopulatory mate choice: proteins such as Bouncer can therefore support the selection of conspecific sperm. The polypeptide is Protein Bouncer (Oryzias latipes (Japanese rice fish)).